We begin with the raw amino-acid sequence, 364 residues long: Apyrase (364 aa).

A signal peptide spans 1 to 35 (MRSSYRVGNPIRFQPTNVVGLLLLSLVLSFMLVQS).

The protein belongs to the apyrase family. Ca(2+) serves as cofactor. As to expression, salivary gland (at protein level).

The protein resides in the secreted. The enzyme catalyses a ribonucleoside 5'-triphosphate + 2 H2O = a ribonucleoside 5'-phosphate + 2 phosphate + 2 H(+). Facilitates hematophagy by inhibiting ADP-dependent platelet aggregation in the host. Cleaves adenosine triphosphate (ATP) and adenosine diphosphate (ADP) to adenosine monophosphate (AMP) and inorganic phosphate in calcium-dependent manner. The polypeptide is Apyrase (Cimex lectularius (Bed bug)).